The following is a 245-amino-acid chain: Carboxymethylenebutenolidase homolog (245 aa).

At Ala-2 the chain carries N-acetylalanine. Lys-36 carries the N6-acetyllysine modification. Catalysis depends on residues Cys-132, Asp-179, and His-212. Ser-223 is modified (phosphoserine).

The protein belongs to the dienelactone hydrolase family. Widely expressed, with highest levels in liver, followed by kidney, small intestine and colon. Present in liver and intestine (at protein level).

It localises to the cytoplasm. The protein resides in the cytosol. With respect to regulation, strongly inhibited by p-chloromercuribenzoate (PCMB). Partially inhibited by bis-p-nitrophenylphosphate (BNPP). Not inhibited by DFP, PMSF, eserine or EDTA. Its function is as follows. Cysteine hydrolase. Can convert the prodrug olmesartan medoxomil into its pharmacologically active metabolite olmerstatan, an angiotensin receptor blocker, in liver and intestine. May also activate beta-lactam antibiotics faropenem medoxomil and lenampicillin. The chain is Carboxymethylenebutenolidase homolog (CMBL) from Homo sapiens (Human).